The primary structure comprises 259 residues: Deoxyribose-phosphate aldolase (259 aa).

Asp102 (proton donor/acceptor) is an active-site residue. Lys167 (schiff-base intermediate with acetaldehyde) is an active-site residue. The active-site Proton donor/acceptor is Lys201.

It belongs to the DeoC/FbaB aldolase family. DeoC type 2 subfamily.

It is found in the cytoplasm. It catalyses the reaction 2-deoxy-D-ribose 5-phosphate = D-glyceraldehyde 3-phosphate + acetaldehyde. It participates in carbohydrate degradation; 2-deoxy-D-ribose 1-phosphate degradation; D-glyceraldehyde 3-phosphate and acetaldehyde from 2-deoxy-alpha-D-ribose 1-phosphate: step 2/2. Its function is as follows. Catalyzes a reversible aldol reaction between acetaldehyde and D-glyceraldehyde 3-phosphate to generate 2-deoxy-D-ribose 5-phosphate. In Salmonella dublin (strain CT_02021853), this protein is Deoxyribose-phosphate aldolase.